A 223-amino-acid polypeptide reads, in one-letter code: Ribosome maturation factor RimM (223 aa).

Residues 142 to 223 (ADEFYWVDLI…RIVVDWEADY (82 aa)) enclose the PRC barrel domain.

It belongs to the RimM family. In terms of assembly, binds ribosomal protein uS19.

The protein resides in the cytoplasm. Its function is as follows. An accessory protein needed during the final step in the assembly of 30S ribosomal subunit, possibly for assembly of the head region. Essential for efficient processing of 16S rRNA. May be needed both before and after RbfA during the maturation of 16S rRNA. It has affinity for free ribosomal 30S subunits but not for 70S ribosomes. The chain is Ribosome maturation factor RimM from Burkholderia multivorans (strain ATCC 17616 / 249).